We begin with the raw amino-acid sequence, 157 residues long: UPF0262 protein RL0614 (157 aa).

This sequence belongs to the UPF0262 family.

The polypeptide is UPF0262 protein RL0614 (Rhizobium johnstonii (strain DSM 114642 / LMG 32736 / 3841) (Rhizobium leguminosarum bv. viciae)).